Consider the following 248-residue polypeptide: Pulmonary surfactant-associated protein A1 (248 aa).

The first 20 residues, methionine 1–cysteine 20, serve as a signal peptide directing secretion. The region spanning glycine 28–proline 100 is the Collagen-like domain. A 4-hydroxyproline mark is found at proline 30, proline 33, proline 36, proline 42, proline 54, proline 57, proline 63, proline 67, and proline 70. A disordered region spans residues glycine 31–alanine 101. A compositionally biased stretch (basic and acidic residues) spans proline 42–lysine 51. A compositionally biased stretch (pro residues) spans proline 54–proline 70. The C-type lectin domain maps to methionine 132–phenylalanine 248. 2 disulfide bridges follow: cysteine 155-cysteine 246 and cysteine 224-cysteine 238. A glycan (N-linked (GlcNAc...) asparagine) is linked at asparagine 207.

Belongs to the SFTPA family. As to quaternary structure, oligomeric complex of 6 set of homotrimers. Interacts with CD93. (Microbial infection) Binds M.bovis cell surface protein Apa via its glycosylated sites; probably also recognizes other bacterial moieties. In terms of assembly, (Microbial infection) Binds to the S.aureus extracellular adherence protein, Eap, thereby enhancing phagocytosis and killing of S.aureus by alveolar macrophages. As to quaternary structure, (Microbial infection) Interacts with M.pneumoniae CARDS toxin; CARDS probably uses this protein as a receptor. Post-translationally, N-acetylated.

The protein localises to the secreted. It localises to the extracellular space. It is found in the extracellular matrix. The protein resides in the surface film. Its function is as follows. In presence of calcium ions, it binds to surfactant phospholipids and contributes to lower the surface tension at the air-liquid interface in the alveoli of the mammalian lung and is essential for normal respiration. Enhances the expression of MYO18A/SP-R210 on alveolar macrophages. In terms of biological role, (Microbial infection) Recognition of M.tuberculosis by dendritic cells may occur partially via this molecule. Can recognize, bind, and opsonize pathogens to enhance their elimination by alveolar macrophages. (Microbial infection) Binds M.pneumoniae CARDS toxin, serves as one receptor for this pathogen. When SFTPA1 is down-regulated by siRNA, less toxin binds to human cells and less vacuolization (a symptom of M.pneumoniae infection) is seen. This Homo sapiens (Human) protein is Pulmonary surfactant-associated protein A1 (SFTPA1).